A 506-amino-acid polypeptide reads, in one-letter code: MIMINSPSYLEFCNISKHFPGVKALSNISFRANKGSIHALMGENGAGKSTLLKTLSGLHQPTEGELVVDGKALVFNSATDALEQGIAIIYQELNLVPELSVAENIYLGQLPTKGGSVDVETLNARAREQLKRLGEDFDPSRPLKEFSIGQWQMVEIAKALSRNAQIIAFDEPTSSLSQREIQNLFKVIRELRDDGKIILYVSHRMEEIFDLCDAITIFKDGTHVQTFDDMTDLTHEKLVELMVGREINDIYNYRSRSLGESGLRIENLEGKGLTQPVSLDIRQGEILGLFGLVGAGRTELTRLIFGAEKAQAGQIYIHGQPISVRSPQDAIRAGITLCPEDRKADAIVPILSVEENTNISARPWNLKLGGLIDFKWERDNAEQQRKALNVKTASLQQAIGQLSGGNQQKVILGRWLSTDMSVILLDEPTRGIDVGAKSEIYELIFNLAERGVTVLVVSSDLPEVLGISDRVMVMKEGAVTGELQRHEFKEQTALSLAMLGNNQAAA.

ABC transporter domains follow at residues 10–245 and 253–501; these read LEFC…MVGR and YRSR…MLGN. ATP is bound at residue 42–49; that stretch reads GENGAGKS.

It belongs to the ABC transporter superfamily. Arabinose importer (TC 3.A.1.2.2) family. As to quaternary structure, the complex is composed of two ATP-binding proteins (AraG), two transmembrane proteins (AraH) and a solute-binding protein (AraF).

It is found in the cell inner membrane. The enzyme catalyses L-arabinose(out) + ATP + H2O = L-arabinose(in) + ADP + phosphate + H(+). Functionally, part of the ABC transporter complex AraFGH involved in arabinose import. Responsible for energy coupling to the transport system. In Vibrio parahaemolyticus serotype O3:K6 (strain RIMD 2210633), this protein is Arabinose import ATP-binding protein AraG.